The chain runs to 137 residues: Early nodulin-55-1 (137 aa).

The 67-residue stretch at 1–67 (KYDERTESVH…GLKLMVVVMS (67 aa)) folds into the Phytocyanin domain. Residues asparagine 13, asparagine 51, and asparagine 68 are each glycosylated (N-linked (GlcNAc...) asparagine). Cysteines 20 and 55 form a disulfide. Residues 70 to 115 (TKKKLIHSPSPSSPSPSPSPSPSPSPSPSPSLSSPSPSPLPNNQGV) are disordered. The segment covering 80–98 (PSSPSPSPSPSPSPSPSPS) has biased composition (pro residues).

It belongs to the early nodulin-like (ENODL) family.

The protein resides in the symbiosome. It is found in the peribacteroid membrane. May act as a carbohydrate transporter. This Glycine max (Soybean) protein is Early nodulin-55-1.